Reading from the N-terminus, the 140-residue chain is Probable glycine cleavage system H protein (140 aa).

A Lipoyl-binding domain is found at 22-114 (RAIIGITSYA…YEEGWIVVLE (93 aa)). K63 carries the post-translational modification N6-lipoyllysine.

Belongs to the GcvH family. The glycine cleavage system is composed of four proteins: P, T, L and H. It depends on (R)-lipoate as a cofactor.

Functionally, the glycine cleavage system catalyzes the degradation of glycine. The H protein shuttles the methylamine group of glycine from the P protein to the T protein. This chain is Probable glycine cleavage system H protein, found in Korarchaeum cryptofilum (strain OPF8).